The sequence spans 463 residues: Tryprostatin B synthase (463 aa).

The brevianamide F site is built by M93 and E101. Dimethylallyl diphosphate contacts are provided by R112, K200, and Y202. Y204 provides a ligand contact to brevianamide F. Residues K293, Y295, Q379, Y381, Y445, and Y449 each contribute to the dimethylallyl diphosphate site.

The protein belongs to the tryptophan dimethylallyltransferase family.

It catalyses the reaction brevianamide F + dimethylallyl diphosphate = tryprostatin B + diphosphate. The protein operates within mycotoxin biosynthesis. Its function is as follows. Brevianamide F prenyltransferase; part of the gene cluster that mediates the biosynthesis of fumitremorgins, indole alkaloids that carry not only intriguing chemical structures, but also interesting biological and pharmacological activities. The biosynthesis of fumitremorgin-type alkaloids begins by condensation of the two amino acids L-tryptophan and L-proline to brevianamide F, catalyzed by the non-ribosomal peptide synthetase ftmPS/ftmA. Brevianamide F is then prenylated by the prenyltransferase ftmPT1/ftmB in the presence of dimethylallyl diphosphate, resulting in the formation of tryprostatin B. The three cytochrome P450 monooxygenases, ftmP450-1/ftmC, ftmP450-2/ftmE and ftmP450-3/FtmG, are responsible for the conversion of tryprostatin B to 6-hydroxytryprostatin B, tryprostatin A to fumitremorgin C and fumitremorgin C to 12,13-dihydroxyfumitremorgin C, respectively. The putative methyltransferase ftmMT/ftmD is expected for the conversion of 6-hydroxytryprostatin B to tryprostatin A. FtmPT2/FtmH catalyzes the prenylation of 12,13-dihydroxyfumitre-morgin C in the presence of dimethylallyl diphosphate, resulting in the formation of fumitremorgin B. Fumitremorgin B is further converted to verruculogen by ftmOx1/ftmF via the insertion of an endoperoxide bond between the two prenyl moieties. Finally, verruculogen is further converted to fumitremorgin A by the verruculogen prenyltransferase ftmPT3. This is Tryprostatin B synthase from Neosartorya fischeri (strain ATCC 1020 / DSM 3700 / CBS 544.65 / FGSC A1164 / JCM 1740 / NRRL 181 / WB 181) (Aspergillus fischerianus).